Consider the following 654-residue polypeptide: Endoplasmic reticulum chaperone BiP (654 aa).

Positions 1–18 (MKFTVVAAALLLLCAVRA) are cleaved as a signal peptide. Residues 1–80 (MKFTVVAAAL…EGERLIGDAA (80 aa)) form a required for interaction with ELAPOR1 region. Residue 36-39 (GTTY) participates in ATP binding. Phosphoserine is present on serine 86. Residue lysine 96 participates in ATP binding. Lysine 125 carries the post-translational modification N6-acetyllysine. Residues 125–280 (KPYIQVDIGG…KKKTGKDVRK (156 aa)) form a nucleotide-binding (NBD) region. Residue tyrosine 160 is modified to 3'-nitrotyrosine. Residue lysine 213 is modified to N6-acetyllysine. 227 to 229 (GGT) provides a ligand contact to ATP. At lysine 271 the chain carries N6-acetyllysine. An ATP-binding site is contributed by 293–300 (EKAKRALS). Lysine 326 is subject to N6-acetyllysine. Lysine 352 participates in a covalent cross-link: Glycyl lysine isopeptide (Lys-Gly) (interchain with G-Cter in SUMO2). N6-acetyllysine; alternate is present on lysine 353. Residue lysine 353 forms a Glycyl lysine isopeptide (Lys-Gly) (interchain with G-Cter in SUMO1); alternate linkage. 364–367 (GSTR) lines the ATP pocket. The tract at residues 409-419 (QDTGDLVLLDV) is interdomain linker. The tract at residues 420 to 500 (CPLTLGIETV…PRGVPQIEVT (81 aa)) is substrate-binding (SBD). Lysine 447 is subject to N6-succinyllysine. At arginine 492 the chain carries Omega-N-methylarginine. Threonine 518 carries the O-AMP-threonine; alternate modification. Phosphothreonine; alternate is present on threonine 518. Lysine 585 is subject to N6,N6,N6-trimethyllysine; by METTL21A; in vitro. N6,N6-dimethyllysine; alternate is present on lysine 585. Position 585 is an N6-methyllysine; alternate (lysine 585). The residue at position 591 (lysine 591) is an N6-methyllysine. Residues 631-654 (ISKLYGSGGPPPTGEEDTSEKDEL) form a disordered region. Residues threonine 643 and threonine 648 each carry the phosphothreonine modification. Acidic residues predominate over residues 644-654 (GEEDTSEKDEL). Residue serine 649 is modified to Phosphoserine. The Prevents secretion from ER motif lies at 651 to 654 (KDEL).

This sequence belongs to the heat shock protein 70 family. As to quaternary structure, monomer and homooligomer; homooligomerization via the interdomain linker inactivates the chaperone activity and acts as a storage of HSPA5/BiP molecules. Interacts with DNAJC1 (via J domain). Component of an EIF2 complex at least composed of CELF1/CUGBP1, CALR, CALR3, EIF2S1, EIF2S2, HSP90B1 and HSPA5. Part of a large chaperone multiprotein complex comprising DNAJB11, HSP90B1, HSPA5, HYOU, PDIA2, PDIA4, PDIA6, PPIB, SDF2L1, UGGT1 and very small amounts of ERP29, but not, or at very low levels, CALR nor CANX. Interacts with TMEM132A and TRIM21. May form a complex with ERLEC1, OS9, SEL1L and SYVN1. Interacts with DNAJC10. Interacts with DNAJB9/ERdj4; leading to recruit HSPA5/BiP to ERN1/IRE1. Interacts with ERN1/IRE1 (via luminal domain); the interaction takes place following interaction with DNAJB9/ERdj4 and leads to inactivate ERN1/IRE1, the interaction also competitively inhibits ERN1 interaction with MANF. Interacts directly with MANF (via SAP domain); the interaction inhibits ATP binding to HSPA5/BiP and subsequent nucleotide exchange. Interacts with EIF2AK3/PERK (via luminal domain); interaction leads to inactivate EIF2AK3/PERK. Interacts with MX1. Interacts with METTL23. Interacts with CEMIP; the interaction induces calcium leakage from the endoplasmic reticulum and cell migration. Interacts with PCSK4 form; the interaction takes place in the endoplasmic reticulum. Interacts with CIPC. Interacts with CCDC88B (via C-terminus); the interaction opposes ERN1-mediated JNK activation, protecting against apoptosis. Interacts with INPP5K; necessary for INPP5K localization at the endoplasmic reticulum. Interacts with MANF; the interaction is direct. Interacts with LOXL2; leading to activate the ERN1/IRE1-XBP1 pathway of the unfolded protein response. Interacts with CLU under stressed condition; interaction increases CLU protein stability; facilitates its retrotranslocation and redistribution to the mitochondria; cooperatively suppress stress-induced apoptosis by stabilizing mitochondrial membrane integrity. Interacts with CCDC47. Interacts with CLN3. Interacts with ELAPOR1; may regulate the function of HSPA5 in apoptosis and cell proliferation. Interacts with CASP7. Interacts with ILDR2; the interaction stabilizes ILDR2 expression. Interacts with ADAM7. In terms of processing, in unstressed cells, AMPylation at Thr-518 by FICD inactivates the chaperome activity: AMPylated form is locked in a relatively inert state and only weakly stimulated by J domain-containing proteins. In response to endoplasmic reticulum stress, de-AMPylation by the same protein, FICD, restores the chaperone activity.

It localises to the endoplasmic reticulum lumen. The protein localises to the melanosome. It is found in the cytoplasm. The protein resides in the cell surface. The enzyme catalyses ATP + H2O = ADP + phosphate + H(+). Its activity is regulated as follows. The chaperone activity is regulated by ATP-induced allosteric coupling of the nucleotide-binding (NBD) and substrate-binding (SBD) domains. In the ADP-bound and nucleotide-free (apo) states, the two domains have little interaction. In contrast, in the ATP-bound state the two domains are tightly coupled, which results in drastically accelerated kinetics in both binding and release of polypeptide substrates. J domain-containing co-chaperones (DNAJB9/ERdj4 or DNAJC10/ERdj5) stimulate the ATPase activity and are required for efficient substrate recognition by HSPA5/BiP. Homooligomerization inactivates participating HSPA5/BiP protomers and probably act as reservoirs to store HSPA5/BiP molecules when they are not needed by the cell. In terms of biological role, endoplasmic reticulum chaperone that plays a key role in protein folding and quality control in the endoplasmic reticulum lumen. Involved in the correct folding of proteins and degradation of misfolded proteins via its interaction with DNAJC10/ERdj5, probably to facilitate the release of DNAJC10/ERdj5 from its substrate. Acts as a key repressor of the EIF2AK3/PERK and ERN1/IRE1-mediated unfolded protein response (UPR). In the unstressed endoplasmic reticulum, recruited by DNAJB9/ERdj4 to the luminal region of ERN1/IRE1, leading to disrupt the dimerization of ERN1/IRE1, thereby inactivating ERN1/IRE1. Also binds and inactivates EIF2AK3/PERK in unstressed cells. Accumulation of misfolded protein in the endoplasmic reticulum causes release of HSPA5/BiP from ERN1/IRE1 and EIF2AK3/PERK, allowing their homodimerization and subsequent activation. Plays an auxiliary role in post-translational transport of small presecretory proteins across endoplasmic reticulum (ER). May function as an allosteric modulator for SEC61 channel-forming translocon complex, likely cooperating with SEC62 to enable the productive insertion of these precursors into SEC61 channel. Appears to specifically regulate translocation of precursors having inhibitory residues in their mature region that weaken channel gating. May also play a role in apoptosis and cell proliferation. The polypeptide is Endoplasmic reticulum chaperone BiP (Rattus norvegicus (Rat)).